The following is an 868-amino-acid chain: Dolichyl-phosphooligosaccharide-protein glycotransferase 3 (868 aa).

At 1-16 the chain is on the cytoplasmic side; the sequence is MQNAESWFKKYWHLSV. Residues 17-36 traverse the membrane as a helical segment; that stretch reads LVIAALISVKLRILNPWNSV. Topologically, residues 37–101 are extracellular; sequence FTWTVRLGGN…IAGIIFSATS (65 aa). Residues 45 to 47 carry the DXD motif 1 motif; it reads GND. Residue Asp-47 participates in Mn(2+) binding. Residue His-81 participates in a glycophospholipid binding. A helical transmembrane segment spans residues 102–131; it reads GESLRAVLAFIPAIGGVLAILPVYLLTREV. The Cytoplasmic portion of the chain corresponds to 132–133; that stretch reads FD. The chain crosses the membrane as a helical span at residues 134-153; sequence KRAAVIAAFLIAIVPGQFLQ. Residues 154–162 are Extracellular-facing; it reads RSILGFNDH. Asp-161 is a Mn(2+) binding site. Residues 161–163 carry the DXD motif 2 motif; sequence DHH. A glycophospholipid is bound at residue His-162. Residue His-163 coordinates Mn(2+). The chain crosses the membrane as a helical span at residues 163–184; the sequence is HIWEAFWQVSALGTFLLAYNRW. Residues 185–199 lie on the Cytoplasmic side of the membrane; that stretch reads KGHDLSHNLTARQMA. A helical membrane pass occupies residues 200–212; the sequence is YPVIAGITIGLYV. Over 213-215 the chain is Extracellular; the sequence is LSW. The chain crosses the membrane as a helical span at residues 216–238; that stretch reads GAGFIIAPIILAFMFFAFVLAGF. The Cytoplasmic segment spans residues 239-241; sequence VNA. The helical transmembrane segment at 242 to 262 threads the bilayer; that stretch reads DRKNLSLVAVVTFAVSALIYL. Over 263–279 the chain is Extracellular; it reads PFAFNYPGFSTIFYSPF. The helical transmembrane segment at 280–303 threads the bilayer; sequence QLLVLLGSAVIAAAFYQIEKWNDV. Residues 304 to 312 are Cytoplasmic-facing; that stretch reads GFFERVGLG. Residues 313-330 traverse the membrane as a helical segment; the sequence is RKGMPLAVIVLTALIMGL. The Extracellular segment spans residues 331 to 373; it reads FFVISPDFARNLLSVVRVVQPKGGALTIAEVYPFFFTHNGEFT. A TIXE motif motif is present at residues 357 to 360; it reads TIAE. The helical transmembrane segment at 374-396 threads the bilayer; that stretch reads LTNAVLHFGALFFFGMAGILYSA. Residues 397–404 are Cytoplasmic-facing; sequence YRFLKRRS. A helical transmembrane segment spans residues 405–423; it reads FPEMALLIWAIAMFIALWG. The Extracellular segment spans residues 424–427; it reads QNRF. Arg-426 is a binding site for a glycophospholipid. A helical membrane pass occupies residues 428-452; the sequence is AYYFAAVSAVYSALALSVVFDKLHL. Topologically, residues 453–468 are cytoplasmic; sequence YRALENAIGARNKLSY. Residues 469–494 traverse the membrane as a helical segment; sequence FRVAFALLIALAAIYPTYILADAQSS. Residues 495-868 lie on the Extracellular side of the membrane; that stretch reads YAGGPNKQWY…QNGEIIQLDL (374 aa). Residues 550–552 form an interacts with target acceptor peptide in protein substrate region; the sequence is WWD. Positions 550–554 match the WWDYG motif motif; that stretch reads WWDYG. Residues 613–622 carry the DKi motif motif; the sequence is EMETGKYYAM.

It belongs to the STT3 family. Requires Mg(2+) as cofactor. Mn(2+) is required as a cofactor. It depends on Zn(2+) as a cofactor.

It is found in the cell membrane. It carries out the reaction an archaeal dolichyl phosphooligosaccharide + [protein]-L-asparagine = an archaeal dolichyl phosphate + a glycoprotein with the oligosaccharide chain attached by N-beta-D-glycosyl linkage to a protein L-asparagine.. The protein operates within protein modification; protein glycosylation. In terms of biological role, oligosaccharyl transferase (OST) that catalyzes the initial transfer of a defined glycan (a glucose-linked heptasaccharide composed of 3 Glc, 2 Man, 2 Gal and a sulfate for A.fulgidus AglB-L) from the lipid carrier dolichol-monophosphate to an asparagine residue within an Asn-X-Ser/Thr consensus motif in nascent polypeptide chains, the first step in protein N-glycosylation. In Archaeoglobus fulgidus (strain ATCC 49558 / DSM 4304 / JCM 9628 / NBRC 100126 / VC-16), this protein is Dolichyl-phosphooligosaccharide-protein glycotransferase 3 (aglB3).